The sequence spans 407 residues: POC1 centriolar protein homolog A (407 aa).

WD repeat units lie at residues 17–56 (GHRD…RAYR), 59–98 (GHKD…ESTV), 101–140 (AHTA…FLFS), 143–182 (QHIN…CVHS), 185–224 (EHGG…LLQH), 227–266 (LHSA…LLYT), and 269–308 (GHQG…VDYG). The disordered stretch occupies residues 317 to 357 (PATRASSSGTLPEVDPLVPPGRGRSQESMQSHSQEPVSVPQ). Polar residues predominate over residues 342–357 (QESMQSHSQEPVSVPQ). A coiled-coil region spans residues 369-397 (QLDVLTQTVSILEQRLTLTEDKLKQCLEN).

It belongs to the WD repeat POC1 family. As to quaternary structure, interacts with POC1B.

It localises to the cytoplasm. Its subcellular location is the cytoskeleton. The protein localises to the microtubule organizing center. It is found in the centrosome. The protein resides in the centriole. It localises to the cilium basal body. Its subcellular location is the spindle pole. Its function is as follows. Plays an important role in centriole assembly and/or stability and ciliogenesis. Involved in early steps of centriole duplication, as well as in the later steps of centriole length control. Acts in concert with POC1B to ensure centriole integrity and proper mitotic spindle formation. This chain is POC1 centriolar protein homolog A (POC1A), found in Bos taurus (Bovine).